Here is a 300-residue protein sequence, read N- to C-terminus: Haloalkane dehalogenase (300 aa).

Positions 32–155 constitute an AB hydrolase-1 domain; sequence AIVFQHGNPT…PAVRGVFQGF (124 aa). The active-site Nucleophile is Asp-109. The active-site Proton donor is the Glu-133. His-273 acts as the Proton acceptor in catalysis.

The protein belongs to the haloalkane dehalogenase family. Type 2 subfamily. As to quaternary structure, monomer.

It catalyses the reaction 1-haloalkane + H2O = a halide anion + a primary alcohol + H(+). In terms of biological role, catalyzes hydrolytic cleavage of carbon-halogen bonds in halogenated aliphatic compounds, leading to the formation of the corresponding primary alcohols, halide ions and protons. The chain is Haloalkane dehalogenase from Mycobacterium bovis (strain BCG / Pasteur 1173P2).